A 484-amino-acid polypeptide reads, in one-letter code: Probable glycine dehydrogenase (decarboxylating) subunit 2 (484 aa).

An N6-(pyridoxal phosphate)lysine modification is found at Lys264.

The protein belongs to the GcvP family. C-terminal subunit subfamily. The glycine cleavage system is composed of four proteins: P, T, L and H. In this organism, the P 'protein' is a heterodimer of two subunits. Pyridoxal 5'-phosphate serves as cofactor.

The catalysed reaction is N(6)-[(R)-lipoyl]-L-lysyl-[glycine-cleavage complex H protein] + glycine + H(+) = N(6)-[(R)-S(8)-aminomethyldihydrolipoyl]-L-lysyl-[glycine-cleavage complex H protein] + CO2. Its function is as follows. The glycine cleavage system catalyzes the degradation of glycine. The P protein binds the alpha-amino group of glycine through its pyridoxal phosphate cofactor; CO(2) is released and the remaining methylamine moiety is then transferred to the lipoamide cofactor of the H protein. This chain is Probable glycine dehydrogenase (decarboxylating) subunit 2, found in Legionella pneumophila (strain Paris).